The primary structure comprises 89 residues: MRSTFAVLFLALIALTYSKNYQDVKEEIKNEVENEILRDLGEDDDELDDNAQEAVNDARPLRRFFRKFRGRKILPYMPSLINIWKAGKK.

A signal peptide spans 1 to 18 (MRSTFAVLFLALIALTYS). A propeptide spanning residues 19–59 (KNYQDVKEEIKNEVENEILRDLGEDDDELDDNAQEAVNDAR) is cleaved from the precursor. Ala-86 carries the post-translational modification Alanine amide.

The protein belongs to the arminin family. In terms of tissue distribution, expressed in entodermal epithelium along the body column.

The protein localises to the secreted. The protein resides in the target cell membrane. Functionally, antimicrobial peptide with a broad-spectrum antimicrobial activity. Keeps its antibacterial activity under a wide range of salt concentrations that mimic physiological conditions of human blood, which is surprising, since Hydra is an obligate freshwater animal with nearly no salt tolerance. Does not affect red blood cells. This is Arminin 7519 from Hydra vulgaris (Hydra).